A 573-amino-acid chain; its full sequence is Protein FAM200A (573 aa).

Residues 1–51 form a disordered region; that stretch reads MTPESRDTTDLSPGGTQEMEGIVIVKVEEEDEEDHFQKERNKVESSPQVLS. Topologically, residues 1–513 are extracellular; sequence MTPESRDTTD…DDFPLLSRKS (513 aa). A helical transmembrane segment spans residues 514-533; that stretch reads ILLLLPFTTTYLCELGFSIL. The Cytoplasmic segment spans residues 534–573; it reads TRLKTKKRNRLNSAPDMRVALSSCVPDWKELMNRQAHPSH.

Belongs to the FAM200 family.

It is found in the membrane. The protein is Protein FAM200A (FAM200A) of Homo sapiens (Human).